A 499-amino-acid chain; its full sequence is Glutamyl-tRNA(Gln) amidotransferase subunit A (499 aa).

Residues Lys75 and Ser150 each act as charge relay system in the active site. Ser174 functions as the Acyl-ester intermediate in the catalytic mechanism.

Belongs to the amidase family. GatA subfamily. In terms of assembly, heterotrimer of A, B and C subunits.

The catalysed reaction is L-glutamyl-tRNA(Gln) + L-glutamine + ATP + H2O = L-glutaminyl-tRNA(Gln) + L-glutamate + ADP + phosphate + H(+). Functionally, allows the formation of correctly charged Gln-tRNA(Gln) through the transamidation of misacylated Glu-tRNA(Gln) in organisms which lack glutaminyl-tRNA synthetase. The reaction takes place in the presence of glutamine and ATP through an activated gamma-phospho-Glu-tRNA(Gln). The polypeptide is Glutamyl-tRNA(Gln) amidotransferase subunit A (Ralstonia pickettii (strain 12J)).